The sequence spans 328 residues: DNA-directed RNA polymerase subunit alpha (328 aa).

An alpha N-terminal domain (alpha-NTD) region spans residues 1-231 (MIYQMQMPER…EHVSLFANFS (231 aa)). Positions 252–328 (MRKLLQTRIE…MDITKYQMKS (77 aa)) are alpha C-terminal domain (alpha-CTD).

The protein belongs to the RNA polymerase alpha chain family. Homodimer. The RNAP catalytic core consists of 2 alpha, 1 beta, 1 beta' and 1 omega subunit. When a sigma factor is associated with the core the holoenzyme is formed, which can initiate transcription.

It carries out the reaction RNA(n) + a ribonucleoside 5'-triphosphate = RNA(n+1) + diphosphate. DNA-dependent RNA polymerase catalyzes the transcription of DNA into RNA using the four ribonucleoside triphosphates as substrates. The chain is DNA-directed RNA polymerase subunit alpha from Prosthecochloris aestuarii (strain DSM 271 / SK 413).